A 338-amino-acid chain; its full sequence is Heat-inducible transcription repressor HrcA (338 aa).

The protein belongs to the HrcA family.

Negative regulator of class I heat shock genes (grpE-dnaK-dnaJ and groELS operons). Prevents heat-shock induction of these operons. This Thermotoga petrophila (strain ATCC BAA-488 / DSM 13995 / JCM 10881 / RKU-1) protein is Heat-inducible transcription repressor HrcA.